We begin with the raw amino-acid sequence, 418 residues long: F-box/LRR-repeat protein 14 (418 aa).

Residues 2–48 (ETHISCLFPELLAMIFGYLDVRDKGRAAQVCTAWRDAAYHKSVWRGV) enclose the F-box domain. The tract at residues 2-48 (ETHISCLFPELLAMIFGYLDVRDKGRAAQVCTAWRDAAYHKSVWRGV) is required for down-regulation of SNAI1. 5 LRR repeats span residues 144–163 (GLEV…GLLL), 170–191 (RLKS…GHLA), 203–225 (GLEQ…HISR), 229–250 (GLRL…LHLS), and 254–275 (SLRS…MHLA).

In terms of assembly, part of a SCF (SKP1-cullin-F-box) ubiquitin-protein ligase complex. Interacts with SKP1 and CUL1. Interacts with SNAI1; the interaction requires the phosphorylation of the two serine residues in the substrate destruction motif D-S-G-X(2,3,4)-S.

The protein resides in the cytoplasm. Functionally, substrate-recognition component of some SCF (SKP1-CUL1-F-box protein)-type E3 ubiquitin-protein ligase complexes. The SCF(FBXL14) complex acts by mediating ubiquitination and subsequent degradation of SNAI1. The chain is F-box/LRR-repeat protein 14 (FBXL14) from Homo sapiens (Human).